The chain runs to 301 residues: Sulfate adenylyltransferase subunit 2 (301 aa).

The tract at residues 278-301 is disordered; that stretch reads ERQGRLIDGDEPASMERKKREGYF.

The protein belongs to the PAPS reductase family. CysD subfamily. As to quaternary structure, sulfate-activating enzymes, NodP and NodQ, may be physically associated.

It catalyses the reaction sulfate + ATP + H(+) = adenosine 5'-phosphosulfate + diphosphate. Proposed to provide activated sulfate for transfer to nod factor. This chain is Sulfate adenylyltransferase subunit 2 (nodP), found in Azospirillum brasilense.